The following is a 363-amino-acid chain: Nicotinamide adenine dinucleotide transporter 2, mitochondrial (363 aa).

Solcar repeat units follow at residues 15–107 (REVA…LKDV), 115–203 (LSIG…IKQY), and 215–305 (LSPG…MLRF). 6 helical membrane passes run 21 to 41 (AGAG…LDVI), 82 to 102 (GLSP…SVYG), 121 to 141 (MIAA…LWVV), 176 to 196 (LYSG…QFPA), 215 to 235 (LSPG…SILT), and 277 to 299 (LYRG…FTTY). A disordered region spans residues 313-363 (ETNRSDDRRREEERKNLVSRRGEEEDKDLGLRESQTQSNKISTPHIPLGSK). Over residues 315–343 (NRSDDRRREEERKNLVSRRGEEEDKDLGL) the composition is skewed to basic and acidic residues. Positions 345 to 354 (ESQTQSNKIS) are enriched in polar residues.

The protein belongs to the mitochondrial carrier (TC 2.A.29) family. Highly expressed in young meristematic shoot area, vascular bundles of leaves, developing siliques including the funiculi, petal veins, developing pollen and central cylinder of roots.

It localises to the mitochondrion membrane. With respect to regulation, inhibited by pyridoxal 5'-phosphate, bathophenanthroline, tannic acid, mersalyl, mercuric chloride, p-hydroxymercuribenzoate, p-hydroxymercuribenzoate sulfonate, bromocresol purple and N-ethylmaleimide. Its function is as follows. Mediates the NAD(+) import into chloroplast. Favors the NAD(+)(in)/ADP or AMP(out) antiport exchange, but is also able to catalyze a low unidirectional transport (uniport) of NAD(+). Transports NAD(+), nicotinic acid adenine dinucleotide, nicotinamide mononucleotide, nicotinic acid mononucleotide, FAD, FMN, TTP, TDP, TMP, UTP, UDP, UMP, CTP, CDP, CMP, GTP, GDP, GMP, 3'-AMP, ATP, ADP and AMP, has low transport activity with cAMP, NADH and alpha-NAD(+), and has no activity with NADP(+), NADPH, nicotinamide, nicotinic acid, adenosine, thiamine mono- or diphosphate, inorganic phosphate, CoA, folate, NaCl, malate, malonate, citrate, fumarate, aspartate, glutamate, S-adenosylmethionine, lysine, arginine, and ornithine. This chain is Nicotinamide adenine dinucleotide transporter 2, mitochondrial (NDT2), found in Arabidopsis thaliana (Mouse-ear cress).